The primary structure comprises 314 residues: Malate dehydrogenase (314 aa).

Residues 11–16 and Asp-35 each bind NAD(+); that span reads GSGNIG. 2 residues coordinate substrate: Arg-84 and Arg-90. Residues Asn-97 and 120–122 each bind NAD(+); that span reads ITN. Substrate is bound by residues Asn-122 and Arg-153. His-177 serves as the catalytic Proton acceptor.

Belongs to the LDH/MDH superfamily. MDH type 3 family.

The enzyme catalyses (S)-malate + NAD(+) = oxaloacetate + NADH + H(+). Its function is as follows. Catalyzes the reversible oxidation of malate to oxaloacetate. The polypeptide is Malate dehydrogenase (Rickettsia africae (strain ESF-5)).